Consider the following 667-residue polypeptide: Threonine--tRNA ligase (667 aa).

One can recognise a TGS domain in the interval 1 to 64 (MSEAISLTFP…TDGKIEIVTR (64 aa)). Residues 245–553 (DHRRLGREMD…LIENFAGHMP (309 aa)) are catalytic. Cys347, His398, and His530 together coordinate Zn(2+).

Belongs to the class-II aminoacyl-tRNA synthetase family. As to quaternary structure, homodimer. Zn(2+) serves as cofactor.

The protein localises to the cytoplasm. The enzyme catalyses tRNA(Thr) + L-threonine + ATP = L-threonyl-tRNA(Thr) + AMP + diphosphate + H(+). Functionally, catalyzes the attachment of threonine to tRNA(Thr) in a two-step reaction: L-threonine is first activated by ATP to form Thr-AMP and then transferred to the acceptor end of tRNA(Thr). Also edits incorrectly charged L-seryl-tRNA(Thr). This Agrobacterium fabrum (strain C58 / ATCC 33970) (Agrobacterium tumefaciens (strain C58)) protein is Threonine--tRNA ligase.